The sequence spans 81 residues: ATP synthase subunit c (81 aa).

2 consecutive transmembrane segments (helical) span residues 5 to 25 (IAAG…IGAG) and 57 to 77 (VGLV…FVFA).

Belongs to the ATPase C chain family. As to quaternary structure, F-type ATPases have 2 components, F(1) - the catalytic core - and F(0) - the membrane proton channel. F(1) has five subunits: alpha(3), beta(3), gamma(1), delta(1), epsilon(1). F(0) has three main subunits: a(1), b(2) and c(10-14). The alpha and beta chains form an alternating ring which encloses part of the gamma chain. F(1) is attached to F(0) by a central stalk formed by the gamma and epsilon chains, while a peripheral stalk is formed by the delta and b chains.

It localises to the cell membrane. Its function is as follows. F(1)F(0) ATP synthase produces ATP from ADP in the presence of a proton or sodium gradient. F-type ATPases consist of two structural domains, F(1) containing the extramembraneous catalytic core and F(0) containing the membrane proton channel, linked together by a central stalk and a peripheral stalk. During catalysis, ATP synthesis in the catalytic domain of F(1) is coupled via a rotary mechanism of the central stalk subunits to proton translocation. Key component of the F(0) channel; it plays a direct role in translocation across the membrane. A homomeric c-ring of between 10-14 subunits forms the central stalk rotor element with the F(1) delta and epsilon subunits. The protein is ATP synthase subunit c of Mycobacterium bovis (strain ATCC BAA-935 / AF2122/97).